The chain runs to 127 residues: DNA-directed RNA polymerases I, II, and III subunit RPABC2 (127 aa).

Acidic residues predominate over residues 1-34; that stretch reads MSDNEDNFDGDDFDDVEEDEGLDDLENAEEEGQE. The disordered stretch occupies residues 1–53; the sequence is MSDNEDNFDGDDFDDVEEDEGLDDLENAEEEGQENVEILPSGERPQANQKRIT. Residue Ser2 is modified to N-acetylserine. At Ser2 the chain carries Phosphoserine; by CK2.

This sequence belongs to the archaeal Rpo6/eukaryotic RPB6 RNA polymerase subunit family. In terms of assembly, component of the RNA polymerase I (Pol I), RNA polymerase II (Pol II) and RNA polymerase III (Pol III) complexes consisting of at least 13, 12 and 17 subunits, respectively. Pol I complex consists of a ten-subunit catalytic core composed of POLR1A/RPA1, POLR1B/RPA2, POLR1C/RPAC1, POLR1D/RPAC2, POLR1H/RPA12, POLR2E/RPABC1, POLR2F/RPABC2, POLR2H/RPABC3, POLR2K/RPABC4 and POLR2L/RPABC5; a mobile stalk subunit POLR1F/RPA43 protruding from the core and additional subunits homologous to general transcription factors POLR1E/RPA49 and POLR1G/RPA34. Part of Pol I pre-initiation complex (PIC), in which Pol I core assembles with RRN3 and promoter-bound UTBF and SL1/TIF-IB complex. Pol II complex contains a ten-subunit catalytic core composed of POLR2A/RPB1, POLR2B/RPB2, POLR2C/RPB3, POLR2I/RPB9, POLR2J/RPB11, POLR2E/RPABC1, POLR2F/RPABC2, POLR2H/RPABC3, POLR2K/RPABC4 and POLR2L/RPABC5 and a mobile stalk composed of two subunits POLR2D/RPB4 and POLR2G/RPB7. Part of Pol II(G) complex, in which Pol II core associates with an additional subunit POLR2M; unlike conventional Pol II, Pol II(G) functions as a transcriptional repressor. Part of TBP-based Pol II pre-initiation complex (PIC), in which Pol II core assembles with general transcription factors and other specific initiation factors including GTF2E1, GTF2E2, GTF2F1, GTF2F2, TCEA1, ERCC2, ERCC3, GTF2H2, GTF2H3, GTF2H4, GTF2H5, GTF2A1, GTF2A2, GTF2B and TBP; this large multi-subunit PIC complex mediates DNA unwinding and targets Pol II core to the transcription start site where the first phosphodiester bond forms. Pol III complex consists of a ten-subunit catalytic core composed of POLR3A/RPC1, POLR3B/RPC2, POLR1C/RPAC1, POLR1D/RPAC2, POLR3K/RPC10, POLR2E/RPABC1, POLR2F/RPABC2, POLR2H/RPABC3, POLR2K/RPABC4 and POLR2L/RPABC5; a mobile stalk composed of two subunits POLR3H/RPC8 and CRCP/RPC9, protruding from the core and functioning primarily in transcription initiation; and additional subunits homologous to general transcription factors of the RNA polymerase II machinery, POLR3C/RPC3-POLR3F/RPC6-POLR3G/RPC7 heterotrimer required for transcription initiation and POLR3D/RPC4-POLR3E/RPC5 heterodimer involved in both transcription initiation and termination.

The protein resides in the nucleus. It is found in the nucleolus. Functionally, DNA-dependent RNA polymerase catalyzes the transcription of DNA into RNA using the four ribonucleoside triphosphates as substrates. Common component of RNA polymerases I, II, and III which synthesize ribosomal RNA precursors, mRNA precursors and many functional non-coding RNAs, and small RNAs, such as 5S rRNA and tRNAs, respectively. Pol II is the central component of the basal RNA polymerase II transcription machinery. Pols are composed of mobile elements that move relative to each other. In Pol II, POLR2F/RPABC2 is part of the clamp element and together with parts of POLR2A/RPB1 and POLR2B/RPB2 forms a pocket to which the POLR2D/RPB4-POLR2G/RPB7 subcomplex binds. The chain is DNA-directed RNA polymerases I, II, and III subunit RPABC2 from Mus musculus (Mouse).